The chain runs to 219 residues: 7-carboxy-7-deazaguanine synthase (219 aa).

Substrate is bound by residues 12-14 and R27; that span reads IQG. One can recognise a Radical SAM core domain in the interval 18 to 219; it reads YTGTPSIFIR…VQIHKYLKIR (202 aa). [4Fe-4S] cluster is bound by residues C31, C35, and C38. Residue T40 coordinates Mg(2+). Residue T92 participates in substrate binding. S-adenosyl-L-methionine is bound by residues G94 and 136–138; that span reads SPK.

This sequence belongs to the radical SAM superfamily. 7-carboxy-7-deazaguanine synthase family. Homodimer. It depends on [4Fe-4S] cluster as a cofactor. S-adenosyl-L-methionine is required as a cofactor. Requires Mg(2+) as cofactor.

It catalyses the reaction 6-carboxy-5,6,7,8-tetrahydropterin + H(+) = 7-carboxy-7-deazaguanine + NH4(+). The protein operates within purine metabolism; 7-cyano-7-deazaguanine biosynthesis. Functionally, catalyzes the complex heterocyclic radical-mediated conversion of 6-carboxy-5,6,7,8-tetrahydropterin (CPH4) to 7-carboxy-7-deazaguanine (CDG), a step common to the biosynthetic pathways of all 7-deazapurine-containing compounds. This Buchnera aphidicola subsp. Schizaphis graminum (strain Sg) protein is 7-carboxy-7-deazaguanine synthase.